Reading from the N-terminus, the 298-residue chain is Lipoyl synthase (298 aa).

7 residues coordinate [4Fe-4S] cluster: cysteine 40, cysteine 45, cysteine 51, cysteine 67, cysteine 71, cysteine 74, and serine 280. The Radical SAM core domain occupies 53–269; the sequence is AVRKTATFMI…KEIALSKGFS (217 aa).

Belongs to the radical SAM superfamily. Lipoyl synthase family. The cofactor is [4Fe-4S] cluster.

It is found in the cytoplasm. It catalyses the reaction [[Fe-S] cluster scaffold protein carrying a second [4Fe-4S](2+) cluster] + N(6)-octanoyl-L-lysyl-[protein] + 2 oxidized [2Fe-2S]-[ferredoxin] + 2 S-adenosyl-L-methionine + 4 H(+) = [[Fe-S] cluster scaffold protein] + N(6)-[(R)-dihydrolipoyl]-L-lysyl-[protein] + 4 Fe(3+) + 2 hydrogen sulfide + 2 5'-deoxyadenosine + 2 L-methionine + 2 reduced [2Fe-2S]-[ferredoxin]. It participates in protein modification; protein lipoylation via endogenous pathway; protein N(6)-(lipoyl)lysine from octanoyl-[acyl-carrier-protein]. Functionally, catalyzes the radical-mediated insertion of two sulfur atoms into the C-6 and C-8 positions of the octanoyl moiety bound to the lipoyl domains of lipoate-dependent enzymes, thereby converting the octanoylated domains into lipoylated derivatives. The protein is Lipoyl synthase of Bacillus mycoides (strain KBAB4) (Bacillus weihenstephanensis).